A 522-amino-acid polypeptide reads, in one-letter code: Anti-sigma-I factor RsgI4 (522 aa).

Over 1–51 (MNLGVVIKIKRKKAIIVTETGEFKAVNARNGMFLGQKILFDQQDVIENNRN) the chain is Cytoplasmic. In terms of domain architecture, RsgI N-terminal anti-sigma spans 2–49 (NLGVVIKIKRKKAIIVTETGEFKAVNARNGMFLGQKILFDQQDVIENN). The chain crosses the membrane as a helical span at residues 52–72 (GIGLAYSAAIAGMVAVFVFMF). Over 73-522 (TYFGLHNFNG…SGILKWGREP (450 aa)) the chain is Extracellular. Over residues 311–361 (SAKTPERATTVPVNTPVKPTDAPTKSPATATATATRAPVKATATPAKTLKP) the composition is skewed to low complexity. The tract at residues 311–371 (SAKTPERATT…SDTPVKTPDG (61 aa)) is disordered. The CBM3 domain maps to 371 to 522 (GEQSVKVRFY…SGILKWGREP (152 aa)).

As to quaternary structure, interacts (via RsgI N-terminal anti-sigma domain) with SigI4.

It is found in the cell membrane. Functionally, anti-sigma factor for SigI4. Negatively regulates SigI4 activity through direct interaction. Binding of the polysaccharide substrate to the extracellular C-terminal sensing domain of RsgI4 may induce a conformational change in its N-terminal cytoplasmic region, leading to the release and activation of SigI4. This Acetivibrio thermocellus (strain ATCC 27405 / DSM 1237 / JCM 9322 / NBRC 103400 / NCIMB 10682 / NRRL B-4536 / VPI 7372) (Clostridium thermocellum) protein is Anti-sigma-I factor RsgI4.